The following is a 243-amino-acid chain: MSMLCYTLIIAFLIGIWAVPKSEDNAPLGSPATSDLSDTSCAQTHEGLKTSRNTDQRHPAPRSQRIKQFGSASNIIVDPKLFQKRRFQSPRVLFSTQPPPLSRDEQSVEFLDNEDALNRNIRAKRETHPVHNRGEYSVCDSISVWVANKTTATDIKGKPVTVMVDVNLNNHVYKQYFFETKCRNPNPVPSGCRGIDSRHWNSYCTTTHTFVKALTMEGNRASWRFIRIDTACVCVISRKTENF.

A signal peptide spans M1–A18. Residues V19 to R125 constitute a propeptide that is removed on maturation. Intrachain disulfides connect C139–C204, C182–C232, and C192–C234. N-linked (GlcNAc...) asparagine glycosylation is present at N148.

Belongs to the NGF-beta family. As to quaternary structure, homodimer; non-covalently linked. Expressed by the venom gland.

It is found in the secreted. Its function is as follows. Nerve growth factor is important for the development and maintenance of the sympathetic and sensory nervous systems. It stimulates division and differentiation of sympathetic and embryonic sensory neurons as well as basal forebrain cholinergic neurons in the brain. Its relevance in the snake venom is not clear. However, it has been shown to inhibit metalloproteinase-dependent proteolysis of platelet glycoprotein Ib alpha, suggesting a metalloproteinase inhibition to prevent metalloprotease autodigestion and/or protection against prey proteases. Binds a lipid between the two protein chains in the homodimer. The lipid-bound form promotes histamine relase from mouse mast cells, contrary to the lipid-free form. In Naja sputatrix (Malayan spitting cobra), this protein is Venom nerve growth factor 1.